The chain runs to 38 residues: Trypsin inhibitor DE5 beta chain (38 aa).

It belongs to the protease inhibitor I3 (leguminous Kunitz-type inhibitor) family. In terms of assembly, heterodimer of an alpha and a beta chain linked by a disulfide bond.

Its function is as follows. Inhibition of trypsin. The chain is Trypsin inhibitor DE5 beta chain from Adenanthera pavonina (Sandal bead tree).